The sequence spans 147 residues: Ubiquitin-conjugating enzyme E2 D2 (147 aa).

The 147-residue stretch at 1–147 folds into the UBC core domain; it reads MALKRIHKEL…AREWTQKYAM (147 aa). The active-site Glycyl thioester intermediate is the Cys-85.

It belongs to the ubiquitin-conjugating enzyme family. In terms of assembly, interacts with SCF (SKP1-CUL1-F-box protein) E3 ubiquitin ligase complex. Interacts with CNOT4 (via RING domain). Interacts with E3 ubiquitin-protein ligases CBLC, PJA1 and PJA2. Interacts with PDZRN3. Interacts with PPP1R11. Interacts with E3 ubiquitin-protein ligase PHF7; the interaction inhibits cleavage of PHF7 and promotes association of the complex with the nucleosome core particle.

The enzyme catalyses S-ubiquitinyl-[E1 ubiquitin-activating enzyme]-L-cysteine + [E2 ubiquitin-conjugating enzyme]-L-cysteine = [E1 ubiquitin-activating enzyme]-L-cysteine + S-ubiquitinyl-[E2 ubiquitin-conjugating enzyme]-L-cysteine.. It carries out the reaction S-ubiquitinyl-[E1 ubiquitin-activating enzyme]-L-cysteine + [acceptor protein]-L-lysine = [E1 ubiquitin-activating enzyme]-L-cysteine + N(6)-monoubiquitinyl-[acceptor protein]-L-lysine.. It participates in protein modification; protein ubiquitination. Accepts ubiquitin from the E1 complex and catalyzes its covalent attachment to other proteins. In vitro catalyzes 'Lys-48'-linked polyubiquitination. Mediates the selective degradation of short-lived and abnormal proteins. Functions in the E6/E6-AP-induced ubiquitination of p53/TP53. Mediates ubiquitination of PEX5 and SQSTM1 and autoubiquitination of STUB1 and TRAF6. Involved in the signal-induced conjugation and subsequent degradation of NFKBIA, FBXW2-mediated GCM1 ubiquitination and degradation, MDM2-dependent degradation of p53/TP53 and the activation of MAVS in the mitochondria by RIGI in response to viral infection. Essential for viral activation of IRF3. This is Ubiquitin-conjugating enzyme E2 D2 (UBE2D2) from Bos taurus (Bovine).